The following is an 85-amino-acid chain: Small ribosomal subunit protein bS20 (85 aa).

The segment at 1 to 22 (MANIKSAIKRAKLSEERRAHNA) is disordered.

This sequence belongs to the bacterial ribosomal protein bS20 family.

Binds directly to 16S ribosomal RNA. The protein is Small ribosomal subunit protein bS20 of Bacillus cytotoxicus (strain DSM 22905 / CIP 110041 / 391-98 / NVH 391-98).